Here is a 206-residue protein sequence, read N- to C-terminus: Protein sym1 (206 aa).

The next 2 membrane-spanning stretches (helical) occupy residues 107–127 and 169–189; these read VLLD…SWMT and LQYQ…FLSL.

This sequence belongs to the peroxisomal membrane protein PXMP2/4 family.

The protein resides in the mitochondrion inner membrane. The protein is Protein sym1 (sym1) of Schizosaccharomyces pombe (strain 972 / ATCC 24843) (Fission yeast).